The sequence spans 165 residues: Putative protein FAM86C1P (165 aa).

This sequence belongs to the class I-like SAM-binding methyltransferase superfamily. EEF2KMT family. Interacts with EEF2KMT.

This is Putative protein FAM86C1P from Homo sapiens (Human).